Here is a 706-residue protein sequence, read N- to C-terminus: Axin-related protein (706 aa).

The region spanning 72-191 is the RGS domain; sequence SLNLLLDDQD…LQSDICKEYA (120 aa). 3 disordered regions span residues 278-298, 400-482, and 585-605; these read MTDG…REIH, TPAN…GTSA, and STTL…GFST. The span at 402–412 shows a compositional bias: polar residues; the sequence is ANLSPRSQSPF. Positions 453–462 are enriched in low complexity; the sequence is RSSVSSQLPR. The region spanning 624–706 is the DIX domain; sequence GQGLAIVYYF…KIICKVERAC (83 aa).

Interacts with dvl2/dsh via DIX domains in both proteins. Forms a complex with ctnnb1/beta-catenin and gsk3b. Also forms heterodimers with mouse Axin1.

It localises to the cytoplasm. Its subcellular location is the cytoplasmic vesicle. In terms of biological role, regulates the wnt signaling pathway by interacting with dvl2/dsh, which displaces gsk3b from the axnr-gsk3b complex and thus prevents degradation of ctnnb1/beta-catenin. This Xenopus laevis (African clawed frog) protein is Axin-related protein.